Here is a 313-residue protein sequence, read N- to C-terminus: MNIFTLLFIYFLSDTVAAYCYYGTEYKNATGCFQFFRTPLNFTNAVRFCRVNMKSTLVRPTSSIRNQQIRGAALKLGIEEYWIGASNVDNDWEWLDGSMLTYSNFDVGGGYPKKTESQIGAVSMSSLAGLWYTKLDAMFLPFVCEFPPSTVYDNGILYRSPKTQSLIFPSAGTKAALLMVDAVDQSRLYSKNEIGPLKTEAETGEKVYLKPINISTNGFPEFSGPPIVILNPYKRKIKVKPVMVSQTETEMSRSRKEKEETEDSINVKSLKEGGTARGNGSSVAEELNSNSKEKREREENETIRSKTIQISRG.

The N-terminal stretch at 1 to 17 is a signal peptide; the sequence is MNIFTLLFIYFLSDTVA. N-linked (GlcNAc...) asparagine glycans are attached at residues Asn-28 and Asn-41. The C-type lectin domain occupies 28 to 145; sequence NATGCFQFFR…DAMFLPFVCE (118 aa). Cys-49 and Cys-144 are joined by a disulfide. Asn-213 is a glycosylation site (N-linked (GlcNAc...) asparagine). Residues 244–313 are disordered; sequence VSQTETEMSR…RSKTIQISRG (70 aa). A compositionally biased stretch (basic and acidic residues) spans 250 to 259; that stretch reads EMSRSRKEKE. N-linked (GlcNAc...) asparagine glycosylation is found at Asn-279 and Asn-300. Over residues 291-304 the composition is skewed to basic and acidic residues; sequence SKEKREREENETIR.

It is found in the secreted. The sequence is that of C-type lectin domain-containing protein 162 (clec-162) from Caenorhabditis elegans.